The primary structure comprises 290 residues: Purine nucleoside phosphorylase (290 aa).

68 to 69 serves as a coordination point for phosphate; it reads RN. Met204 is a binding site for substrate. Thr205 serves as a coordination point for phosphate.

The protein belongs to the PNP/MTAP phosphorylase family. MTAP subfamily. In terms of assembly, homotrimer.

The protein resides in the cytoplasm. It localises to the nucleus. It catalyses the reaction a purine D-ribonucleoside + phosphate = a purine nucleobase + alpha-D-ribose 1-phosphate. It participates in purine metabolism; purine nucleoside salvage. Its function is as follows. Purine nucleoside phosphorylase involved in purine salvage. The protein is Purine nucleoside phosphorylase of Drosophila melanogaster (Fruit fly).